The chain runs to 255 residues: ATP synthase subunit a 2 (255 aa).

5 helical membrane passes run 24 to 44 (WFGI…VFIL), 86 to 106 (LIGP…AVDL), 131 to 151 (DINI…GYTF), 205 to 225 (MIFI…SVPW), and 226 to 246 (ALFH…LTVV).

The protein belongs to the ATPase A chain family. F-type ATPases have 2 components, CF(1) - the catalytic core - and CF(0) - the membrane proton channel. CF(1) has five subunits: alpha(3), beta(3), gamma(1), delta(1), epsilon(1). CF(0) has three main subunits: a(1), b(2) and c(9-12). The alpha and beta chains form an alternating ring which encloses part of the gamma chain. CF(1) is attached to CF(0) by a central stalk formed by the gamma and epsilon chains, while a peripheral stalk is formed by the delta and b chains.

The protein localises to the cell inner membrane. Functionally, key component of the proton channel; it plays a direct role in the translocation of protons across the membrane. This chain is ATP synthase subunit a 2, found in Vibrio campbellii (strain ATCC BAA-1116).